A 180-amino-acid chain; its full sequence is Free methionine-R-sulfoxide reductase (180 aa).

Residues G99–C177 enclose the GAF domain.

This sequence belongs to the free Met sulfoxide reductase family.

The protein localises to the cytoplasm. It is found in the nucleus. The catalysed reaction is [thioredoxin]-disulfide + L-methionine + H2O = L-methionine (R)-S-oxide + [thioredoxin]-dithiol. Its function is as follows. Catalyzes the reversible oxidation-reduction of the R-enantiomer of free methionine sulfoxide to methionine. Does not act on S-enantiomer of free methionine sulfoxide or R-enantiomer of dabsylated methionine sulfoxide. Involved in protection against oxidative stress. The polypeptide is Free methionine-R-sulfoxide reductase (Saccharomyces cerevisiae (strain ATCC 204508 / S288c) (Baker's yeast)).